The primary structure comprises 458 residues: UDP-N-acetylglucosamine 1-carboxyvinyltransferase (458 aa).

A phosphoenolpyruvate-binding site is contributed by 34–35; the sequence is KN. Arginine 104 provides a ligand contact to UDP-N-acetyl-alpha-D-glucosamine. The active-site Proton donor is the cysteine 128. The residue at position 128 (cysteine 128) is a 2-(S-cysteinyl)pyruvic acid O-phosphothioketal. Positions 319 and 341 each coordinate UDP-N-acetyl-alpha-D-glucosamine.

The protein belongs to the EPSP synthase family. MurA subfamily.

It is found in the cytoplasm. The enzyme catalyses phosphoenolpyruvate + UDP-N-acetyl-alpha-D-glucosamine = UDP-N-acetyl-3-O-(1-carboxyvinyl)-alpha-D-glucosamine + phosphate. It functions in the pathway cell wall biogenesis; peptidoglycan biosynthesis. Its function is as follows. Cell wall formation. Adds enolpyruvyl to UDP-N-acetylglucosamine. In Prochlorococcus marinus (strain MIT 9515), this protein is UDP-N-acetylglucosamine 1-carboxyvinyltransferase.